The following is a 241-amino-acid chain: Eukaryotic translation initiation factor 6 (241 aa).

This sequence belongs to the eIF-6 family. As to quaternary structure, monomer. Associates with the 60S ribosomal subunit.

The protein resides in the cytoplasm. Its subcellular location is the nucleus. It localises to the nucleolus. Its function is as follows. Binds to the 60S ribosomal subunit and prevents its association with the 40S ribosomal subunit to form the 80S initiation complex in the cytoplasm. Is also involved in ribosome biogenesis. Associates with pre-60S subunits in the nucleus and is involved in its nuclear export. The sequence is that of Eukaryotic translation initiation factor 6 from Encephalitozoon cuniculi (strain GB-M1) (Microsporidian parasite).